The chain runs to 271 residues: Enolase-phosphatase E1 (271 aa).

Asp18 and Glu20 together coordinate Mg(2+). Residues 144-145 (SS) and Lys194 contribute to the substrate site. Residue Asp221 coordinates Mg(2+).

It belongs to the HAD-like hydrolase superfamily. MasA/MtnC family. As to quaternary structure, monomer. Mg(2+) is required as a cofactor.

Its subcellular location is the cytoplasm. The protein localises to the nucleus. It carries out the reaction 5-methylsulfanyl-2,3-dioxopentyl phosphate + H2O = 1,2-dihydroxy-5-(methylsulfanyl)pent-1-en-3-one + phosphate. The protein operates within amino-acid biosynthesis; L-methionine biosynthesis via salvage pathway; L-methionine from S-methyl-5-thio-alpha-D-ribose 1-phosphate: step 3/6. Its pathway is amino-acid biosynthesis; L-methionine biosynthesis via salvage pathway; L-methionine from S-methyl-5-thio-alpha-D-ribose 1-phosphate: step 4/6. In terms of biological role, bifunctional enzyme that catalyzes the enolization of 2,3-diketo-5-methylthiopentyl-1-phosphate (DK-MTP-1-P) into the intermediate 2-hydroxy-3-keto-5-methylthiopentenyl-1-phosphate (HK-MTPenyl-1-P), which is then dephosphorylated to form the acireductone 1,2-dihydroxy-3-keto-5-methylthiopentene (DHK-MTPene). This Candida albicans (strain WO-1) (Yeast) protein is Enolase-phosphatase E1.